The chain runs to 150 residues: Placenta-specific protein 4 (150 aa).

As to expression, expressed in placental syncytiotrophoblast and choriocarcinoma cells.

The protein is Placenta-specific protein 4 (PLAC4) of Homo sapiens (Human).